The primary structure comprises 379 residues: MTNTRKSHPLIKIVNHSFIDLPAPSNISAWWNFGSLLGMCLGLQILTGLFLAMHYTADTTTAFSSVTHICRDVNYGWLIRYMHANGASMFFIFLYFHIGRGIYYGSYTFTDTWNMGVLLLLTTMATAFMGYVLPWGQMSFWGATVITNLLSAIPYIGPTLVEWIWGGFSVDKATLTRFFAFHFILPFIITAMVMIHLLFLHETGSNNPSGMNSDSDKIPFHPYYTIKDILGALFMIITLMSLVMFSPDLLGDPDNYAPANPLNTPPHIKPEWYFLFAYAILRSIPNKLGGVLALASSILILMLFPILHLSKQRSMSFRPLSQCLMWMLVTNLLILTWIGGQPVEYPFITIGQMASMTYFFTTLILMPLTALMENKLLKW.

4 helical membrane-spanning segments follow: residues 33 to 53 (FGSLLGMCLGLQILTGLFLAM), 77 to 98 (WLIRYMHANGASMFFIFLYFHI), 113 to 133 (WNMGVLLLLTTMATAFMGYVL), and 178 to 198 (FFAFHFILPFIITAMVMIHLL). Residues His83 and His97 each coordinate heme b. The heme b site is built by His182 and His196. His201 contacts a ubiquinone. 4 helical membrane-spanning segments follow: residues 226–246 (IKDILGALFMIITLMSLVMFS), 288–308 (LGGVLALASSILILMLFPILH), 320–340 (LSQCLMWMLVTNLLILTWIGG), and 347–367 (FITIGQMASMTYFFTTLILMP).

Belongs to the cytochrome b family. The cytochrome bc1 complex contains 11 subunits: 3 respiratory subunits (MT-CYB, CYC1 and UQCRFS1), 2 core proteins (UQCRC1 and UQCRC2) and 6 low-molecular weight proteins (UQCRH/QCR6, UQCRB/QCR7, UQCRQ/QCR8, UQCR10/QCR9, UQCR11/QCR10 and a cleavage product of UQCRFS1). This cytochrome bc1 complex then forms a dimer. It depends on heme b as a cofactor.

The protein localises to the mitochondrion inner membrane. In terms of biological role, component of the ubiquinol-cytochrome c reductase complex (complex III or cytochrome b-c1 complex) that is part of the mitochondrial respiratory chain. The b-c1 complex mediates electron transfer from ubiquinol to cytochrome c. Contributes to the generation of a proton gradient across the mitochondrial membrane that is then used for ATP synthesis. This Ctenomys leucodon (White-toothed tuco-tuco) protein is Cytochrome b (MT-CYB).